A 627-amino-acid polypeptide reads, in one-letter code: (R)-linalool synthase, chloroplastic (627 aa).

The N-terminal 21 residues, 1-21 (MAFVSIAPLASRCCVHKSFVS), are a transit peptide targeting the chloroplast. Asp378, Asp382, and Glu530 together coordinate Mg(2+). The DDXXD motif signature appears at 378-382 (DDIYD).

Belongs to the terpene synthase family. Tpsd subfamily. Mg(2+) is required as a cofactor. It depends on Mn(2+) as a cofactor.

It is found in the plastid. The protein localises to the chloroplast. The catalysed reaction is (2E)-geranyl diphosphate + H2O = (R)-linalool + diphosphate. It functions in the pathway terpene metabolism; oleoresin biosynthesis. In terms of biological role, terpene synthase (TPS) involved in the biosynthesis of monoterpene natural products included in conifer oleoresin secretions and volatile emissions; these compounds contribute to biotic and abiotic stress defense against herbivores and pathogens. Catalyzes the conversion of (2E)-geranyl diphosphate (GPP) to (R)-linalool. In Picea glauca (White spruce), this protein is (R)-linalool synthase, chloroplastic.